We begin with the raw amino-acid sequence, 448 residues long: Probable ribonuclease FAU-1 (448 aa).

Belongs to the FAU-1 family.

In terms of biological role, probable RNase involved in rRNA stability through maturation and/or degradation of precursor rRNAs. Binds to RNA in loop regions with AU-rich sequences. The polypeptide is Probable ribonuclease FAU-1 (Pyrobaculum calidifontis (strain DSM 21063 / JCM 11548 / VA1)).